Here is a 905-residue protein sequence, read N- to C-terminus: Core protein VP3 (905 aa).

The protein belongs to the orbivirus VP3 family.

Its subcellular location is the virion. Functionally, the VP3 protein is one of the five proteins (with VP1, VP4, VP6 and VP7) which form the inner capsid of the virus. In African horse sickness virus (AHSV), this protein is Core protein VP3 (Segment-3).